We begin with the raw amino-acid sequence, 478 residues long: Dynein regulatory complex subunit 4 (478 aa).

Residues M1–A12 are compositionally biased toward basic residues. The tract at residues M1 to E32 is disordered. A regulates microtubule-binding region spans residues M1–A114. 2 coiled-coil regions span residues E24–D201 and N243–V427. The tract at residues E115 to M258 is microtubule-binding. The tract at residues Q357 to T478 is interaction with SMO.

It belongs to the DRC4 family. Component of the nexin-dynein regulatory complex (N-DRC). Interacts with microtubules. Interacts with SMO. Interacts (via coiled-coil domains) with RAB3B (in GTP-bound form). Interacts with DRC1. Interacts with DRC7.

It localises to the cytoplasm. The protein localises to the cytoskeleton. Its subcellular location is the cell projection. The protein resides in the cilium. It is found in the flagellum. It localises to the cilium axoneme. The protein localises to the cilium basal body. Its subcellular location is the golgi apparatus. The protein resides in the flagellum axoneme. Functionally, component of the nexin-dynein regulatory complex (N-DRC), a key regulator of ciliary/flagellar motility which maintains the alignment and integrity of the distal axoneme and regulates microtubule sliding in motile axonemes. Plays an important role in the assembly of the N-DRC linker. Plays dual roles at both the primary (or non-motile) cilia to regulate hedgehog signaling and in motile cilia to coordinate cilia movement. Required for proper motile cilia functioning. Positively regulates ciliary smoothened (SMO)-dependent Hedgehog (Hh) signaling pathway by facilitating the trafficking of SMO into the cilium and the stimulation of SMO activity in a GRK2-dependent manner. This is Dynein regulatory complex subunit 4 (Gas8) from Rattus norvegicus (Rat).